We begin with the raw amino-acid sequence, 804 residues long: G-type lectin S-receptor-like serine/threonine-protein kinase At1g61490 (804 aa).

The first 24 residues, 1–24, serve as a signal peptide directing secretion; sequence MGKKRIVFFACLLLFTVLLRFSYA. The region spanning 25-144 is the Bulb-type lectin domain; it reads GITTESPLSV…ASGRTLWESF (120 aa). Residues 25-425 are Extracellular-facing; it reads GITTESPLSV…SELGGNKRNK (401 aa). 6 N-linked (GlcNAc...) asparagine glycosylation sites follow: Asn53, Asn94, Asn117, Asn134, Asn236, and Asn267. One can recognise an EGF-like domain in the interval 278–314; it reads PANSCDIYGVCGPFGLCIVSVPLKCKCLKGFVPHSTE. Disulfide bonds link Cys282–Cys294 and Cys288–Cys302. N-linked (GlcNAc...) asparagine glycosylation is found at Asn320, Asn336, and Asn375. The 83-residue stretch at 333–415 folds into the PAN domain; sequence CQGNSTGKDV…GEILSIRLAH (83 aa). 2 disulfides stabilise this stretch: Cys368–Cys389 and Cys372–Cys378. Residues 426–446 traverse the membrane as a helical segment; sequence IIVASTVSLSLFVILTSAAFG. Residues 447–804 lie on the Cytoplasmic side of the membrane; sequence FWRYRVKHKA…EMTQSMILGR (358 aa). Residues 490-775 enclose the Protein kinase domain; sequence FSLSNKLGQG…DLPSPKQPTF (286 aa). Residues 496-504 and Lys518 contribute to the ATP site; that span reads LGQGGFGSV. Phosphoserine is present on residues Ser524 and Ser539. Residues 579 to 596 are caM-binding; it reads RKKLEVDWPKRFDIVQGI. Asp615 (proton acceptor) is an active-site residue. 2 positions are modified to phosphoserine: Ser619 and Ser632. Thr649 carries the post-translational modification Phosphothreonine. Ser692 is subject to Phosphoserine.

Belongs to the protein kinase superfamily. Ser/Thr protein kinase family.

Its subcellular location is the cell membrane. It carries out the reaction L-seryl-[protein] + ATP = O-phospho-L-seryl-[protein] + ADP + H(+). The catalysed reaction is L-threonyl-[protein] + ATP = O-phospho-L-threonyl-[protein] + ADP + H(+). In Arabidopsis thaliana (Mouse-ear cress), this protein is G-type lectin S-receptor-like serine/threonine-protein kinase At1g61490.